The sequence spans 282 residues: Bis(5'-nucleosyl)-tetraphosphatase, symmetrical (282 aa).

Belongs to the Ap4A hydrolase family.

The catalysed reaction is P(1),P(4)-bis(5'-adenosyl) tetraphosphate + H2O = 2 ADP + 2 H(+). In terms of biological role, hydrolyzes diadenosine 5',5'''-P1,P4-tetraphosphate to yield ADP. The polypeptide is Bis(5'-nucleosyl)-tetraphosphatase, symmetrical (Salmonella paratyphi A (strain ATCC 9150 / SARB42)).